We begin with the raw amino-acid sequence, 250 residues long: DNA repair protein RecO (250 aa).

Belongs to the RecO family.

Its function is as follows. Involved in DNA repair and RecF pathway recombination. This is DNA repair protein RecO from Syntrophobacter fumaroxidans (strain DSM 10017 / MPOB).